The chain runs to 675 residues: Protein kintoun (675 aa).

Disordered stretches follow at residues 98 to 131, 265 to 293, 310 to 340, and 509 to 659; these read ASKKQQQEQEKQEKEQQQQAAGAGKPEGPGKQGA, AGEGAGGRVRPRPDVPGVPDLPGAKTAPP, EGGAGSSSRSTFSFDKSRKAGGTEAAGAVAK, and EAAH…AAPT. Residues 102–113 show a composition bias toward basic and acidic residues; that stretch reads QQQEQEKQEKEQ. Residues 279 to 293 show a composition bias toward low complexity; sequence VPGVPDLPGAKTAPP. Over residues 529–543 the composition is skewed to low complexity; that stretch reads AAAASSGAAPAPAAA. A compositionally biased stretch (acidic residues) spans 544 to 553; that stretch reads SEEEEEEDKE. A compositionally biased stretch (low complexity) spans 564–577; the sequence is DPAAAAAAAGASSG. A compositionally biased stretch (basic and acidic residues) spans 579–596; it reads ELTENERKWRELHARQQQ. Low complexity-rich tracts occupy residues 604–617 and 628–659; these read AAEAAAAAAAAAAE and VAQGGAAAAAESVAAAKQQVQQQPVAAAAAPT.

The protein belongs to the PIH1 family. Kintoun subfamily.

Its subcellular location is the cytoplasm. Its function is as follows. Required for cytoplasmic pre-assembly of axonemal dyneins, thereby playing a central role in motility in cilia and flagella. Involved in pre-assembly of dynein arm complexes in the cytoplasm before intraflagellar transport loads them for the ciliary compartment. This Chlamydomonas reinhardtii (Chlamydomonas smithii) protein is Protein kintoun (pf13).